The primary structure comprises 227 residues: Enolase-phosphatase E1 (227 aa).

Belongs to the HAD-like hydrolase superfamily. MasA/MtnC family. Monomer. Mg(2+) is required as a cofactor.

It carries out the reaction 5-methylsulfanyl-2,3-dioxopentyl phosphate + H2O = 1,2-dihydroxy-5-(methylsulfanyl)pent-1-en-3-one + phosphate. It participates in amino-acid biosynthesis; L-methionine biosynthesis via salvage pathway; L-methionine from S-methyl-5-thio-alpha-D-ribose 1-phosphate: step 3/6. The protein operates within amino-acid biosynthesis; L-methionine biosynthesis via salvage pathway; L-methionine from S-methyl-5-thio-alpha-D-ribose 1-phosphate: step 4/6. Functionally, bifunctional enzyme that catalyzes the enolization of 2,3-diketo-5-methylthiopentyl-1-phosphate (DK-MTP-1-P) into the intermediate 2-hydroxy-3-keto-5-methylthiopentenyl-1-phosphate (HK-MTPenyl-1-P), which is then dephosphorylated to form the acireductone 1,2-dihydroxy-3-keto-5-methylthiopentene (DHK-MTPene). The polypeptide is Enolase-phosphatase E1 (Pseudomonas savastanoi pv. phaseolicola (strain 1448A / Race 6) (Pseudomonas syringae pv. phaseolicola (strain 1448A / Race 6))).